Consider the following 590-residue polypeptide: uncharacterized protein (590 aa).

2 disordered regions span residues 306–329 (IAEP…GIPY) and 528–590 (QPAP…LMNL). The segment covering 543 to 563 (PSLPQPVPEPLAPQEPPPPGT) has biased composition (pro residues).

This is an uncharacterized protein from Ictaluridae (bullhead catfishes).